The primary structure comprises 149 residues: MIKTYVVTHLRKMEEGIPEGLQVVDLPMTSEERTQVRRRLETPSGLVLNLALPTGTVLQPGQILCVVEGVAYRVVAAPEEVLVIYPRSLKEAAQVGHLIGNLHRPIDLSGEVIAILYDAALEERLRNLGLVVVREMRSFAKTPLPGHSH.

The protein belongs to the UreE family.

It is found in the cytoplasm. Its function is as follows. Involved in urease metallocenter assembly. Binds nickel. Probably functions as a nickel donor during metallocenter assembly. This chain is Urease accessory protein UreE, found in Synechococcus sp. (strain JA-3-3Ab) (Cyanobacteria bacterium Yellowstone A-Prime).